Consider the following 251-residue polypeptide: Ribosomal RNA small subunit methyltransferase J (251 aa).

S-adenosyl-L-methionine is bound by residues 100–101, 116–117, and Asp170; these read RD and ER.

This sequence belongs to the methyltransferase superfamily. RsmJ family.

The protein localises to the cytoplasm. It catalyses the reaction guanosine(1516) in 16S rRNA + S-adenosyl-L-methionine = N(2)-methylguanosine(1516) in 16S rRNA + S-adenosyl-L-homocysteine + H(+). In terms of biological role, specifically methylates the guanosine in position 1516 of 16S rRNA. This Actinobacillus pleuropneumoniae serotype 3 (strain JL03) protein is Ribosomal RNA small subunit methyltransferase J.